We begin with the raw amino-acid sequence, 236 residues long: Purine nucleoside phosphorylase DeoD-type 1 (236 aa).

Residue His-5 participates in a purine D-ribonucleoside binding. Phosphate is bound by residues Gly-21, Arg-25, Arg-44, and 88 to 91; that span reads RVGS. A purine D-ribonucleoside contacts are provided by residues 180–182 and 204–205; these read EME and TD. Asp-205 (proton donor) is an active-site residue.

The protein belongs to the PNP/UDP phosphorylase family. Homohexamer; trimer of homodimers.

The enzyme catalyses a purine D-ribonucleoside + phosphate = a purine nucleobase + alpha-D-ribose 1-phosphate. It catalyses the reaction a purine 2'-deoxy-D-ribonucleoside + phosphate = a purine nucleobase + 2-deoxy-alpha-D-ribose 1-phosphate. Catalyzes the reversible phosphorolytic breakdown of the N-glycosidic bond in the beta-(deoxy)ribonucleoside molecules, with the formation of the corresponding free purine bases and pentose-1-phosphate. The polypeptide is Purine nucleoside phosphorylase DeoD-type 1 (Shewanella oneidensis (strain ATCC 700550 / JCM 31522 / CIP 106686 / LMG 19005 / NCIMB 14063 / MR-1)).